The chain runs to 395 residues: Protein TAMALIN (395 aa).

A disordered region spans residues 1–52 (MTLRRLRKLQQKEEAAATPDPAARTPDSEVAPAAPVPTPGPPAAAATPGPPA). The segment covering 16–33 (AATPDPAARTPDSEVAPA) has biased composition (low complexity). Phosphothreonine is present on Thr77. Ser94 bears the Phosphoserine mark. Residues 101–190 (VLTLEKEDNQ…VLRLETLYGT (90 aa)) form the PDZ domain. The segment at 181–258 (VLRLETLYGT…GAGLLPGSLP (78 aa)) is interaction with PSCD3. A Phosphotyrosine modification is found at Tyr237. Arg270 is subject to Omega-N-methylarginine. The segment at 293–349 (SEPPALPPPPPPARAFGPGPAETPAVGPGPGPRAALSRSASVRCAGPGGGGGGGAPG) is disordered. Residues 296 to 305 (PALPPPPPPA) are compositionally biased toward pro residues. Over residues 338 to 348 (GPGGGGGGGAP) the composition is skewed to gly residues. Phosphoserine is present on Ser387.

In terms of assembly, heteromer. Composed of TAMALIN, CYTH2 and at least one GRM1. Also interacts with CYTH3, GRM2, GRM3 and GRM5.

It is found in the cytoplasm. Its subcellular location is the perinuclear region. It localises to the cell membrane. The protein localises to the postsynaptic cell membrane. Plays a role in intracellular trafficking and contributes to the macromolecular organization of group 1 metabotropic glutamate receptors (mGluRs) at synapses. The protein is Protein TAMALIN of Homo sapiens (Human).